The primary structure comprises 77 residues: Acyl carrier protein (77 aa).

Residues 2–77 (SSIDKRIKEI…DAIDYITDHT (76 aa)) form the Carrier domain. S37 is subject to O-(pantetheine 4'-phosphoryl)serine.

Belongs to the acyl carrier protein (ACP) family. Post-translationally, 4'-phosphopantetheine is transferred from CoA to a specific serine of apo-ACP by AcpS. This modification is essential for activity because fatty acids are bound in thioester linkage to the sulfhydryl of the prosthetic group.

Its subcellular location is the cytoplasm. Its pathway is lipid metabolism; fatty acid biosynthesis. Its function is as follows. Carrier of the growing fatty acid chain in fatty acid biosynthesis. This Geotalea daltonii (strain DSM 22248 / JCM 15807 / FRC-32) (Geobacter daltonii) protein is Acyl carrier protein.